The primary structure comprises 491 residues: Mitochondrial MYO2 receptor-related protein 1 (491 aa).

At T12 the chain carries Phosphothreonine. A phosphoserine mark is found at S16 and S37. A coiled-coil region spans residues 295-384 (NAEEANSREK…CKKVLKKLTE (90 aa)). Positions 300 to 439 (NSREKSNLDI…GTSSEEDHLT (140 aa)) are interaction with MYO2. The interval 419 to 491 (KKIEEQPDSS…LPVQVEKKEK (73 aa)) is disordered. Positions 461–472 (SAISTTASVQSG) are enriched in polar residues.

As to quaternary structure, interacts with MYO2 and PCL7. In terms of processing, phosphorylated by the cyclin-CDK PCL7-PHO85.

Its subcellular location is the bud tip. The protein localises to the bud neck. It localises to the mitochondrion outer membrane. Involved in the guiding of mitochondrial tubules to the bud tip during cell division. The chain is Mitochondrial MYO2 receptor-related protein 1 (MMR1) from Saccharomyces cerevisiae (strain ATCC 204508 / S288c) (Baker's yeast).